A 462-amino-acid polypeptide reads, in one-letter code: Exodeoxyribonuclease 7 large subunit (462 aa).

It belongs to the XseA family. In terms of assembly, heterooligomer composed of large and small subunits.

It localises to the cytoplasm. It carries out the reaction Exonucleolytic cleavage in either 5'- to 3'- or 3'- to 5'-direction to yield nucleoside 5'-phosphates.. Its function is as follows. Bidirectionally degrades single-stranded DNA into large acid-insoluble oligonucleotides, which are then degraded further into small acid-soluble oligonucleotides. The sequence is that of Exodeoxyribonuclease 7 large subunit from Pectobacterium atrosepticum (strain SCRI 1043 / ATCC BAA-672) (Erwinia carotovora subsp. atroseptica).